Consider the following 187-residue polypeptide: Resolvase OPG149 (187 aa).

The protein belongs to the RuvC family. Poxviruses-type subfamily. It depends on Mg(2+) as a cofactor.

Its function is as follows. Plays a role in DNA replication by cleaving viral DNA concatamers to yield unit-length viral genomes. The concatamer junctions contain inverted repeat sequences that can be extruded as cruciforms, yielding Holliday junctions that A22 protein cleaves. This is Resolvase OPG149 (OPG149) from Vaccinia virus (strain Western Reserve) (VACV).